A 245-amino-acid polypeptide reads, in one-letter code: Uridylate kinase (245 aa).

15–18 (KLSG) is an ATP binding site. The interval 23 to 28 (GDEGFG) is involved in allosteric activation by GTP. UMP is bound at residue Gly-57. ATP-binding residues include Gly-58 and Arg-62. UMP-binding positions include Asp-77 and 138-145 (TGNPFCTT). Thr-165, Tyr-171, and Asp-174 together coordinate ATP.

Belongs to the UMP kinase family. As to quaternary structure, homohexamer.

The protein resides in the cytoplasm. It catalyses the reaction UMP + ATP = UDP + ADP. The protein operates within pyrimidine metabolism; CTP biosynthesis via de novo pathway; UDP from UMP (UMPK route): step 1/1. With respect to regulation, allosterically activated by GTP. Inhibited by UTP. Functionally, catalyzes the reversible phosphorylation of UMP to UDP. This is Uridylate kinase from Shewanella baltica (strain OS155 / ATCC BAA-1091).